The following is a 327-amino-acid chain: Malate dehydrogenase (327 aa).

11–17 (GAAGQIS) provides a ligand contact to NAD(+). Substrate is bound by residues arginine 92 and arginine 98. Residues asparagine 105, glutamine 112, and 129–131 (VGN) contribute to the NAD(+) site. 2 residues coordinate substrate: asparagine 131 and arginine 162. Histidine 187 functions as the Proton acceptor in the catalytic mechanism.

The protein belongs to the LDH/MDH superfamily. MDH type 2 family.

It carries out the reaction (S)-malate + NAD(+) = oxaloacetate + NADH + H(+). In terms of biological role, catalyzes the reversible oxidation of malate to oxaloacetate. The polypeptide is Malate dehydrogenase (Nitrosomonas europaea (strain ATCC 19718 / CIP 103999 / KCTC 2705 / NBRC 14298)).